We begin with the raw amino-acid sequence, 261 residues long: Triosephosphate isomerase (261 aa).

Substrate is bound at residue 10 to 12; that stretch reads NWK. The active-site Electrophile is histidine 100. Residue glutamate 172 is the Proton acceptor of the active site. Residues glycine 178, serine 218, and 239–240 each bind substrate; that span reads GG.

The protein belongs to the triosephosphate isomerase family. In terms of assembly, homodimer.

It is found in the cytoplasm. The enzyme catalyses D-glyceraldehyde 3-phosphate = dihydroxyacetone phosphate. It functions in the pathway carbohydrate biosynthesis; gluconeogenesis. It participates in carbohydrate degradation; glycolysis; D-glyceraldehyde 3-phosphate from glycerone phosphate: step 1/1. Its function is as follows. Involved in the gluconeogenesis. Catalyzes stereospecifically the conversion of dihydroxyacetone phosphate (DHAP) to D-glyceraldehyde-3-phosphate (G3P). In Mycolicibacterium paratuberculosis (strain ATCC BAA-968 / K-10) (Mycobacterium paratuberculosis), this protein is Triosephosphate isomerase.